The chain runs to 284 residues: MKKHFKNLIKNSYFFLLITLIYLPLLIVVLVSLNGSSSRGNIVLDFGNVLNPNPDSKSAYLRLGETDFATPLINSIIIGVITVLVSVPIAVISAFALLRTRNALKKTIFGITNFSLATPDIITAISLVLLFANTWLSFNQQLGFFTIITSHISFSVPYALILIYPKIQKLNPNLILASQDLGYSPLKTFFHITLPYLMPSIFSAVLVVFATSFDDYVITSLVQGSVKTIATELYSFRKGIKAWAIAFGSILILISVLGVCLITLQKYLREKRKEIIKIRQWKNS.

Transmembrane regions (helical) follow at residues 13-33 (YFFL…LVSL), 76-96 (IIIG…SAFA), 116-136 (LATP…NTWL), 143-163 (GFFT…LILI), 189-209 (FFHI…LVVF), and 242-262 (AWAI…VCLI). The region spanning 72–263 (LINSIIIGVI…ISVLGVCLIT (192 aa)) is the ABC transmembrane type-1 domain.

The protein belongs to the binding-protein-dependent transport system permease family. CysTW subfamily.

It is found in the cell membrane. Its function is as follows. Required for the activity of the bacterial transport system of putrescine and spermidine. The polypeptide is Spermidine/putrescine transport system permease protein PotC homolog (potC) (Mycoplasma genitalium (strain ATCC 33530 / DSM 19775 / NCTC 10195 / G37) (Mycoplasmoides genitalium)).